The chain runs to 237 residues: Golgi to ER traffic protein 1 (237 aa).

The Lumenal portion of the chain corresponds to 1–4 (MDSG). The chain crosses the membrane as a helical span at residues 5–24 (GWIVYCCIFFILLGKVLEYT). Residues 25-110 (SSYQDKWFTK…SSKKVFGRVK (86 aa)) lie on the Cytoplasmic side of the membrane. Residues 40-99 (EARKLNSQYHELLSERLRLQEENHSISAQDNYARWTKNNRKLGELDKKLGTIRDKLQETN) are a coiled coil. The chain crosses the membrane as a helical span at residues 111–131 (LIGLTIPFWILKIWQRSHVVY). Residues 132–176 (HFPKQDLFPKLVTGVWARGWLYLALGPLQYLRNGSLNIQDYAPHG) lie on the Lumenal side of the membrane. The helical transmembrane segment at 177-193 (VSLGIWIWALQATINTL) threads the bilayer. Topologically, residues 194–237 (EFLVKQVILEKPVSPPPQKSKSATKAETKRPEKLEITDDKVELD) are cytoplasmic. A disordered region spans residues 205 to 237 (PVSPPPQKSKSATKAETKRPEKLEITDDKVELD). A compositionally biased stretch (basic and acidic residues) spans 217–237 (TKAETKRPEKLEITDDKVELD).

Belongs to the WRB/GET1 family. As to quaternary structure, component of the Golgi to ER traffic (GET) complex, which is composed of GET1, GET2 and GET3. Within the complex, GET1 and GET2 form a heterotetramer which is stabilized by phosphatidylinositol binding and which binds to the GET3 homodimer.

It is found in the endoplasmic reticulum membrane. Its subcellular location is the golgi apparatus membrane. Required for the post-translational delivery of tail-anchored (TA) proteins to the endoplasmic reticulum. Together with GET2, acts as a membrane receptor for soluble GET3, which recognizes and selectively binds the transmembrane domain of TA proteins in the cytosol. The GET complex cooperates with the HDEL receptor ERD2 to mediate the ATP-dependent retrieval of resident ER proteins that contain a C-terminal H-D-E-L retention signal from the Golgi to the ER. The polypeptide is Golgi to ER traffic protein 1 (Zygosaccharomyces rouxii (strain ATCC 2623 / CBS 732 / NBRC 1130 / NCYC 568 / NRRL Y-229)).